The following is a 110-amino-acid chain: UPF0145 protein Blon_0093/BLIJ_0092 (110 aa).

The protein belongs to the UPF0145 family.

In Bifidobacterium longum subsp. infantis (strain ATCC 15697 / DSM 20088 / JCM 1222 / NCTC 11817 / S12), this protein is UPF0145 protein Blon_0093/BLIJ_0092.